Here is a 269-residue protein sequence, read N- to C-terminus: Uncharacterised methyltransferase MT1546 (269 aa).

This sequence belongs to the methyltransferase superfamily.

This is Uncharacterised methyltransferase MT1546 from Mycobacterium tuberculosis (strain CDC 1551 / Oshkosh).